The chain runs to 308 residues: Beta-1,3-galactosyltransferase 5 (308 aa).

Topologically, residues 1 to 7 (MAHMKTR) are cytoplasmic. Residues 8–25 (LVYASILMMGALCLYFSM) traverse the membrane as a helical; Signal-anchor for type II membrane protein segment. Residues 26 to 308 (DSFRELPFVF…NSKEQDCPAV (283 aa)) lie on the Lumenal side of the membrane. 3 N-linked (GlcNAc...) asparagine glycosylation sites follow: N128, N172, and N229.

This sequence belongs to the glycosyltransferase 31 family. In terms of tissue distribution, expressed in brain and kidney.

It localises to the golgi apparatus membrane. The catalysed reaction is a globoside Gb4Cer (d18:1(4E)) + UDP-alpha-D-galactose = a globoside GalGb4Cer (d18:1(4E)) + UDP + H(+). It participates in protein modification; protein glycosylation. Its function is as follows. Catalyzes the transfer of Gal to GlcNAc-based acceptors with a preference for the core3 O-linked glycan GlcNAc(beta1,3)GalNAc structure. Can use glycolipid LC3Cer as an efficient acceptor. Also catalyzes the transfer of Gal to the terminal GalNAc unit of the globoside GB4, thereby synthesizing the glycolipid GB5, also known as the stage-specific embryonic antigen-3 (SSEA-3). This is Beta-1,3-galactosyltransferase 5 from Mus musculus (Mouse).